A 363-amino-acid polypeptide reads, in one-letter code: Peptide chain release factor 1 (363 aa).

Glutamine 237 bears the N5-methylglutamine mark. The span at 284-296 shows a compositional bias: basic and acidic residues; the sequence is EDEKRRSAEESTR. Positions 284–305 are disordered; sequence EDEKRRSAEESTRRSLVASGDR.

The protein belongs to the prokaryotic/mitochondrial release factor family. Post-translationally, methylated by PrmC. Methylation increases the termination efficiency of RF1.

The protein localises to the cytoplasm. Functionally, peptide chain release factor 1 directs the termination of translation in response to the peptide chain termination codons UAG and UAA. The chain is Peptide chain release factor 1 from Shewanella sp. (strain MR-4).